An 817-amino-acid chain; its full sequence is MAALASFTRNSRSYGQQPIDVTQQGQRDRSVMSLDAQGRSVSHECPTSTTLVRQLYLPQIPQSASFAAAPTSFSGASSSSSNHHHPVYHSQNSLPPNLLGSSQNSASSNSLVQGHRNPALGSGNTLTRSYHQPSSTNSSTNNLYGPLGTISRDLKQSIRDISPPVINSSANPHLVNYVQTSSFDNGSYEFPSGQAQQQRRLGGSQQHLAPLQQTASSLYSNPQSSSSQLLGQQQAVRPNYAYQQSLPRQQHINSHQTQAFFGTVRGPTNSTNIVTPLRASKTMIDVLAPVRDTVAAQATGLPNVGTSSSNGSSNSSSGVGSGGSGSLMTQSIGGPNKHLSASHSTLNTASTHDMMHSKIPKSPSNESLSRSHTSSSGGSQGGHNSNSGSNSGFRPEDAVQTFGAKLVPFEKNEIYNYTRVFFVGSHAKKQAGVIGGANNGGYDDENGSYQLVVHDHIAYRYEVLKVIGKGSFGQVIKAFDHKYQQYVALKLVRNEKRFHRQADEEIRILDHLRRQDSDGTHNIIHMLDYFNFRNHKCITFELLSINLYELIKRNKFQGFSLMLVRKFAYSMLLCLDLLQKNRLIHCDLKPENVLLKQQGRSGIKVIDFGSSCFDDQRIYTYIQSRFYRAPEVILGTKYGMPIDMWSLGCILAELLTGYPLLPGEDENDQLALIIELLGMPPPKSLETAKRARTFITSKGYPRYCTATSMPDGSVVLAGARSKRGKMRGPPASRSWSTALKNMGDELFVDFLKRCLDWDPETRMTPAQALKHKWLRRRLPNPPRDGLESMGGLADHEKKTETLPNIDSNANILMRKKF.

Disordered regions lie at residues 1-46 (MAAL…HECP), 70-148 (PTSF…GPLG), 186-206 (GSYE…GSQQ), and 301-396 (LPNV…FRPE). Residues 7–25 (FTRNSRSYGQQPIDVTQQG) are compositionally biased toward polar residues. Composition is skewed to low complexity over residues 70-81 (PTSFSGASSSSS) and 97-111 (NLLG…SNSL). Polar residues-rich tracts occupy residues 122 to 143 (SGNT…TNNL) and 193 to 206 (GQAQ…GSQQ). Residues 303-318 (NVGTSSSNGSSNSSSG) are compositionally biased toward low complexity. Residues 327–351 (LMTQSIGGPNKHLSASHSTLNTAST) show a composition bias toward polar residues. Ser362 carries the post-translational modification Phosphoserine; by cdk-1. Residues 364 to 392 (SNESLSRSHTSSSGGSQGGHNSNSGSNSG) show a composition bias toward low complexity. The 314-residue stretch at 461 to 774 (YEVLKVIGKG…PAQALKHKWL (314 aa)) folds into the Protein kinase domain. ATP contacts are provided by residues 467–475 (IGKGSFGQV) and Lys490. Asp587 acts as the Proton acceptor in catalysis. A Phosphotyrosine; by autocatalysis modification is found at Tyr621.

Belongs to the protein kinase superfamily. CMGC Ser/Thr protein kinase family. MNB/DYRK subfamily. In terms of assembly, part of a complex, consisting of pseudophosphatases egg-3, egg-4, egg-5 and kinase mbk-2; this complex is required for the oocyte-to-zygote transition. Interacts (via Tyr-619 and Tyr-621) with egg-4 (via tyrosine-protein phosphatase domain) and egg-5 (via tyrosine-protein phosphatase domain); mbk-2 tyrosine phosphorylation enhances the interaction. The interaction inhibits mbk-2 kinase activity and is required for mbk-2 oocyte cortex localization. Interacts (via N-terminus) with egg-3 (via tyrosine-protein phosphatase domain); the interaction does not affect mbk-2 kinase activity, is enhanced by mbk-2 tyrosine phosphorylation status and requires prior binding of mbk-2 to egg-4 and egg-5. Mg(2+) is required as a cofactor. Autophosphorylated. As to expression, in L1 larvae, expressed widely in the nervous system, including head neurons and the ventral nerve cord. In adult animals, continues to be expressed in the nervous system and is also expressed in body wall muscle.

The protein localises to the cytoplasm. Its subcellular location is the cell cortex. The enzyme catalyses L-seryl-[protein] + ATP = O-phospho-L-seryl-[protein] + ADP + H(+). The catalysed reaction is L-threonyl-[protein] + ATP = O-phospho-L-threonyl-[protein] + ADP + H(+). It carries out the reaction L-tyrosyl-[protein] + ATP = O-phospho-L-tyrosyl-[protein] + ADP + H(+). With respect to regulation, activated during oocyte maturation by phosphorylation on Ser-362 by cdk-1. The pseudotyrosine phosphatases egg-4 and egg-5 sequester activated mbk-2 until the meiotic divisions and inhibit mbk-2 kinase activity directly, using a mixed-inhibition mechanism that does not involve tyrosine dephosphorylation. Functionally, required for oocyte-to-zygote transition in which it phosphorylates oocyte proteins, including mei-1, oma-1, oma-2, mex-5, and mex-6, modifying their activity and/or stability following meiosis. Through phosphorylation of P granule components including meg-1, promotes the disassembly of zygotic P granules in the anterior cytoplasm during zygote polarization, and thus plays a role in P granule distribution and segregation in early stage embryos following meiosis. Functions in both spindle positioning and in the posterior localization of cytoplasmic determinants, including pie-1, pos-1, and pgl-1, in early embryos. Involved in the asymmetric distribution of plk-1 at the 2-cell embryonic stage. The polypeptide is Dual specificity tyrosine-phosphorylation-regulated kinase mbk-2 (Caenorhabditis elegans).